The primary structure comprises 403 residues: Acetate kinase (403 aa).

Asn-7 contacts Mg(2+). Lys-14 contributes to the ATP binding site. Residue Arg-90 participates in substrate binding. The active-site Proton donor/acceptor is Asp-147. ATP is bound by residues 207 to 211 (HIGNG), 283 to 285 (DMR), and 331 to 335 (GVGEN). Glu-386 provides a ligand contact to Mg(2+).

It belongs to the acetokinase family. Homodimer. The cofactor is Mg(2+). Mn(2+) is required as a cofactor.

The protein resides in the cytoplasm. The catalysed reaction is acetate + ATP = acetyl phosphate + ADP. Its pathway is metabolic intermediate biosynthesis; acetyl-CoA biosynthesis; acetyl-CoA from acetate: step 1/2. Catalyzes the formation of acetyl phosphate from acetate and ATP. Can also catalyze the reverse reaction. Phosphorylates propionate (54%) in addition to acetate (100%). Uses GTP (100%), ITP (163%), UTP (56%), and CTP (21%) as phosphoryl donors in addition to ATP (100%). The sequence is that of Acetate kinase from Thermotoga maritima (strain ATCC 43589 / DSM 3109 / JCM 10099 / NBRC 100826 / MSB8).